Consider the following 614-residue polypeptide: V-type proton ATPase catalytic subunit A isoform 1 (614 aa).

247–254 contacts ATP; sequence GAFGCGKT.

This sequence belongs to the ATPase alpha/beta chains family. As to quaternary structure, V-ATPase is a heteromultimeric enzyme made up of two complexes: the ATP-hydrolytic V1 complex and the proton translocation V0 complex. The V1 complex consists of three catalytic AB heterodimers that form a heterohexamer, three peripheral stalks each consisting of EG heterodimers, one central rotor including subunits D and F, and the regulatory subunits C and H. The proton translocation complex V0 consists of the proton transport subunit a, a ring of proteolipid subunits c9c'', rotary subunit d, subunits e and f, and the accessory subunits VhaAC45 and ATP6AP2.

It carries out the reaction ATP + H2O + 4 H(+)(in) = ADP + phosphate + 5 H(+)(out). ATP hydrolysis occurs at the interface between the nucleotide-binding domains of subunits A and B. ATP hydrolysis triggers a conformational change in the subunits D and F, which induces a shift of subunit d. The c-ring is subsequently rotated and results in a continuous proton translocation across the membrane. Its function is as follows. Catalytic subunit of the V1 complex of vacuolar(H+)-ATPase (V-ATPase), a multisubunit enzyme composed of a peripheral complex (V1) that hydrolyzes ATP and a membrane integral complex (V0) that translocates protons. V-ATPase is responsible for acidifying and maintaining the pH of intracellular compartments and in some cell types, is targeted to the plasma membrane, where it is responsible for acidifying the extracellular environment. In Drosophila melanogaster (Fruit fly), this protein is V-type proton ATPase catalytic subunit A isoform 1 (Vha68-1).